The primary structure comprises 357 residues: Probable dual-specificity RNA methyltransferase RlmN (357 aa).

The active-site Proton acceptor is the E92. In terms of domain architecture, Radical SAM core spans 98 to 330 (QEYGLSVCVT…KKNGINCVIR (233 aa)). A disulfide bond links C105 and C341. [4Fe-4S] cluster is bound by residues C112, C116, and C119. S-adenosyl-L-methionine-binding positions include 164 to 165 (GE), S196, 219 to 221 (SLH), and N297. The active-site S-methylcysteine intermediate is the C341.

The protein belongs to the radical SAM superfamily. RlmN family. The cofactor is [4Fe-4S] cluster.

The protein localises to the cytoplasm. The enzyme catalyses adenosine(2503) in 23S rRNA + 2 reduced [2Fe-2S]-[ferredoxin] + 2 S-adenosyl-L-methionine = 2-methyladenosine(2503) in 23S rRNA + 5'-deoxyadenosine + L-methionine + 2 oxidized [2Fe-2S]-[ferredoxin] + S-adenosyl-L-homocysteine. It catalyses the reaction adenosine(37) in tRNA + 2 reduced [2Fe-2S]-[ferredoxin] + 2 S-adenosyl-L-methionine = 2-methyladenosine(37) in tRNA + 5'-deoxyadenosine + L-methionine + 2 oxidized [2Fe-2S]-[ferredoxin] + S-adenosyl-L-homocysteine. Functionally, specifically methylates position 2 of adenine 2503 in 23S rRNA and position 2 of adenine 37 in tRNAs. In Enterococcus faecalis (strain ATCC 700802 / V583), this protein is Probable dual-specificity RNA methyltransferase RlmN.